Consider the following 377-residue polypeptide: Queuine tRNA-ribosyltransferase (377 aa).

Catalysis depends on Asp-93, which acts as the Proton acceptor. Residues 93 to 97 (DSGGF), Asp-147, Gln-191, and Gly-218 each bind substrate. The RNA binding stretch occupies residues 249 to 255 (GVGTPLD). Asp-268 acts as the Nucleophile in catalysis. The tract at residues 273–277 (TRNAR) is RNA binding; important for wobble base 34 recognition. The Zn(2+) site is built by Cys-306, Cys-308, Cys-311, and His-337.

The protein belongs to the queuine tRNA-ribosyltransferase family. As to quaternary structure, homodimer. Within each dimer, one monomer is responsible for RNA recognition and catalysis, while the other monomer binds to the replacement base PreQ1. Requires Zn(2+) as cofactor.

The enzyme catalyses 7-aminomethyl-7-carbaguanine + guanosine(34) in tRNA = 7-aminomethyl-7-carbaguanosine(34) in tRNA + guanine. The protein operates within tRNA modification; tRNA-queuosine biosynthesis. Functionally, catalyzes the base-exchange of a guanine (G) residue with the queuine precursor 7-aminomethyl-7-deazaguanine (PreQ1) at position 34 (anticodon wobble position) in tRNAs with GU(N) anticodons (tRNA-Asp, -Asn, -His and -Tyr). Catalysis occurs through a double-displacement mechanism. The nucleophile active site attacks the C1' of nucleotide 34 to detach the guanine base from the RNA, forming a covalent enzyme-RNA intermediate. The proton acceptor active site deprotonates the incoming PreQ1, allowing a nucleophilic attack on the C1' of the ribose to form the product. After dissociation, two additional enzymatic reactions on the tRNA convert PreQ1 to queuine (Q), resulting in the hypermodified nucleoside queuosine (7-(((4,5-cis-dihydroxy-2-cyclopenten-1-yl)amino)methyl)-7-deazaguanosine). This is Queuine tRNA-ribosyltransferase from Oleidesulfovibrio alaskensis (strain ATCC BAA-1058 / DSM 17464 / G20) (Desulfovibrio alaskensis).